The following is a 324-amino-acid chain: Antihemorrhagic factor cMSF (324 aa).

Residues 1–19 (MHFLVALVLLGQIIGSTLS) form the signal peptide. Cystatin fetuin-A-type domains are found at residues 22–130 (VRGD…VKCH) and 141–254 (RNCL…SDCV). Residues 23 to 25 (RGD) carry the Cell attachment site motif. 7 disulfides stabilise this stretch: cysteine 28/cysteine 315, cysteine 85/cysteine 96, cysteine 110/cysteine 129, cysteine 143/cysteine 146, cysteine 205/cysteine 217, cysteine 230/cysteine 253, and cysteine 287/cysteine 291. The N-linked (GlcNAc...) asparagine glycan is linked to asparagine 204. Asparagine 282 carries N-linked (GlcNAc...) asparagine glycosylation.

Homodimer. In terms of tissue distribution, expressed by the liver.

The protein localises to the secreted. Functionally, suppress hemorrhage induced by metalloproteinases from the same venom (brevilysin-H3, -H4, -H6) and from habu venom (metalloproteinases HR1A and HR1B). The non-hemorrhagic brevilysin-L4 is not inhibited by cMSF. Does not inhibit serine and cysteine proteases such as trypsin, chymotrypsin, thermolysin, and papain. The inhibition may occur by formation of a non-covalent complex between this protein and the proteinases at their metalloproteinase domains. This Gloydius brevicauda (Korean slamosa snake) protein is Antihemorrhagic factor cMSF.